The following is a 213-amino-acid chain: uncharacterized protein (213 aa).

This is an uncharacterized protein from Homo sapiens (Human).